The primary structure comprises 378 residues: tRNA (guanine(26)-N(2))-dimethyltransferase (378 aa).

In terms of domain architecture, Trm1 methyltransferase spans 4–374 (KEVTEGKVRI…KGYEEIIRCV (371 aa)). S-adenosyl-L-methionine contacts are provided by R44, R69, D87, D114, and A115. Zn(2+) is bound by residues C246, C249, C263, and C266.

It belongs to the class I-like SAM-binding methyltransferase superfamily. Trm1 family.

The enzyme catalyses guanosine(26) in tRNA + 2 S-adenosyl-L-methionine = N(2)-dimethylguanosine(26) in tRNA + 2 S-adenosyl-L-homocysteine + 2 H(+). Dimethylates a single guanine residue at position 26 of a number of tRNAs using S-adenosyl-L-methionine as donor of the methyl groups. This Saccharolobus islandicus (strain Y.G.57.14 / Yellowstone #1) (Sulfolobus islandicus) protein is tRNA (guanine(26)-N(2))-dimethyltransferase.